Here is a 1171-residue protein sequence, read N- to C-terminus: DExH-box ATP-dependent RNA helicase DExH15 chloroplastic (1171 aa).

The transit peptide at 1-58 directs the protein to the chloroplast; the sequence is MNTLPVVSLTASSSFKFFHFPSLHRSLSHSPNFSFTKSLILNPNHLSFKSTLNSLSPS. Residues 53–62 show a composition bias toward polar residues; sequence NSLSPSQSQL. A disordered region spans residues 53–111; the sequence is NSLSPSQSQLYEEEDDEEEEEEDEDDDDEAADEYDNISDEIRNSDDDDDDEETEFSVDL. Acidic residues-rich tracts occupy residues 63-90 and 97-107; these read YEEEDDEEEEEEDEDDDDEAADEYDNIS and DDDDDDEETEF. The 165-residue stretch at 163-327 folds into the Helicase ATP-binding domain; sequence IEAFLRGSSV…WIGEIHGKTE (165 aa). 176 to 183 is a binding site for ATP; that stretch reads APTSSGKT. Residues 275 to 278 carry the DEVH box motif; that stretch reads DEVH. A Helicase C-terminal domain is found at 424 to 620; it reads QISDTLWHLQ…ASYGMVLNLV (197 aa).

The protein belongs to the DExH box helicase family.

The protein localises to the plastid. The protein resides in the chloroplast. It is found in the cytoplasmic granule. It catalyses the reaction ATP + H2O = ADP + phosphate + H(+). Functionally, RNA helicase involved in group II intron splicing. Essential protein required during embryogenesis. Involved in post-transcriptional gene silencing. Modulates the determination of cell fate. Necessary for normal plasmodesmata (PD) development and aperture regulation. The protein is DExH-box ATP-dependent RNA helicase DExH15 chloroplastic (ISE2) of Arabidopsis thaliana (Mouse-ear cress).